The following is a 214-amino-acid chain: 3,4-dihydroxy-2-butanone 4-phosphate synthase (214 aa).

D-ribulose 5-phosphate contacts are provided by residues 40–41 (RE), Asp-45, 153–157 (RRGHT), and Glu-177. Glu-41 is a binding site for Mg(2+). His-156 is a binding site for Mg(2+).

This sequence belongs to the DHBP synthase family. As to quaternary structure, homodimer. The cofactor is Mg(2+). It depends on Mn(2+) as a cofactor.

The enzyme catalyses D-ribulose 5-phosphate = (2S)-2-hydroxy-3-oxobutyl phosphate + formate + H(+). Its pathway is cofactor biosynthesis; riboflavin biosynthesis; 2-hydroxy-3-oxobutyl phosphate from D-ribulose 5-phosphate: step 1/1. Functionally, catalyzes the conversion of D-ribulose 5-phosphate to formate and 3,4-dihydroxy-2-butanone 4-phosphate. This chain is 3,4-dihydroxy-2-butanone 4-phosphate synthase, found in Rhodospirillum rubrum (strain ATCC 11170 / ATH 1.1.1 / DSM 467 / LMG 4362 / NCIMB 8255 / S1).